The sequence spans 713 residues: Mitochondrial intermediate peptidase (713 aa).

A mitochondrion-targeting transit peptide spans 1 to 35 (MLCVGRLGGLGARAAALPPRRAGRGILEAGIRARR). Position 126 is an N6-acetyllysine (lysine 126). Histidine 495 lines the Zn(2+) pocket. Glutamate 496 is an active-site residue. Zn(2+) is bound by residues histidine 499 and histidine 502.

This sequence belongs to the peptidase M3 family. In terms of assembly, monomer. Zn(2+) serves as cofactor.

It is found in the mitochondrion matrix. It carries out the reaction Release of an N-terminal octapeptide as second stage of processing of some proteins imported into the mitochondrion.. With respect to regulation, activity is divalent cation-dependent. It is stimulated by manganese, magnesium or calcium ions and reversibly inhibited by zinc, cobalt and iron. Functionally, cleaves proteins, imported into the mitochondrion, to their mature size. The chain is Mitochondrial intermediate peptidase (MIPEP) from Pongo abelii (Sumatran orangutan).